Consider the following 249-residue polypeptide: ATP synthase subunit a, chloroplastic (249 aa).

The next 5 membrane-spanning stretches (helical) occupy residues 40 to 60, 97 to 117, 136 to 156, 201 to 221, and 222 to 242; these read QVLITSWVVIAILLGSAIVAV, VPFIGTMFLFIFVSNWAGALL, INTTVALALLTSIAYFYAGLS, LVVVVLVSLVPSVVPIPVMFL, and GLFTSGIQALIFATLAAAYIG.

It belongs to the ATPase A chain family. In terms of assembly, F-type ATPases have 2 components, CF(1) - the catalytic core - and CF(0) - the membrane proton channel. CF(1) has five subunits: alpha(3), beta(3), gamma(1), delta(1), epsilon(1). CF(0) has four main subunits: a, b, b' and c.

The protein resides in the plastid. It localises to the chloroplast thylakoid membrane. Functionally, key component of the proton channel; it plays a direct role in the translocation of protons across the membrane. The protein is ATP synthase subunit a, chloroplastic of Manihot esculenta (Cassava).